The chain runs to 301 residues: tRNA-cytidine(32) 2-sulfurtransferase (301 aa).

The PP-loop motif signature appears at 47-52 (SGGKDS). [4Fe-4S] cluster contacts are provided by Cys122, Cys125, and Cys213.

The protein belongs to the TtcA family. In terms of assembly, homodimer. The cofactor is Mg(2+). It depends on [4Fe-4S] cluster as a cofactor.

The protein resides in the cytoplasm. It carries out the reaction cytidine(32) in tRNA + S-sulfanyl-L-cysteinyl-[cysteine desulfurase] + AH2 + ATP = 2-thiocytidine(32) in tRNA + L-cysteinyl-[cysteine desulfurase] + A + AMP + diphosphate + H(+). The protein operates within tRNA modification. Its function is as follows. Catalyzes the ATP-dependent 2-thiolation of cytidine in position 32 of tRNA, to form 2-thiocytidine (s(2)C32). The sulfur atoms are provided by the cysteine/cysteine desulfurase (IscS) system. This Photobacterium profundum (strain SS9) protein is tRNA-cytidine(32) 2-sulfurtransferase.